We begin with the raw amino-acid sequence, 642 residues long: Extracellular metalloproteinase 4 (642 aa).

The N-terminal stretch at M1 to A18 is a signal peptide. Residues H19 to A253 constitute a propeptide that is removed on maturation. Positions S49–F60 are enriched in polar residues. Residues S49–G72 form a disordered region. The span at T61 to S71 shows a compositional bias: low complexity. An N-linked (GlcNAc...) asparagine glycan is attached at N419. A Zn(2+)-binding site is contributed by H436. E437 is an active-site residue. H440 is a binding site for Zn(2+). N509 and N602 each carry an N-linked (GlcNAc...) asparagine glycan.

It belongs to the peptidase M36 family. The cofactor is Zn(2+).

The protein localises to the secreted. In terms of biological role, secreted metalloproteinase that allows assimilation of proteinaceous substrates and probably acts as a virulence factor. The sequence is that of Extracellular metalloproteinase 4 (MEP4) from Arthroderma gypseum (strain ATCC MYA-4604 / CBS 118893) (Microsporum gypseum).